The sequence spans 423 residues: Putative competence-damage inducible protein (423 aa).

Belongs to the CinA family.

The sequence is that of Putative competence-damage inducible protein from Streptococcus pyogenes serotype M4 (strain MGAS10750).